Here is a 204-residue protein sequence, read N- to C-terminus: Movement protein TGB2 (204 aa).

Over 1 to 11 (MKTTVGSRPNK) the chain is Cytoplasmic. A helical transmembrane segment spans residues 12–32 (YWPIVAGIGVVGLFAYLIFSN). Topologically, residues 33–72 (QKHSTESGDNIHKFANGGSYRDGSKSISYNRNHPFAYGNA) are lumenal. A helical membrane pass occupies residues 73–93 (SSPGMLLPAMLTIIGIISYLW). The Cytoplasmic segment spans residues 94–204 (RTRDSVLGDS…RFNQCFEYSS (111 aa)).

The protein belongs to the virgaviridae/benyvirus TGB2 movement protein family. Interacts with movement protein TGB3. TGB1-TGB3-TGB2 complex formation is enhanced by ATP hydrolysis.

It is found in the host cell junction. The protein resides in the host plasmodesma. Its subcellular location is the host endoplasmic reticulum membrane. It localises to the host cytoplasm. The protein localises to the host cytoskeleton. Participates in the transport of viral genome to neighboring plant cells directly through plasmodesmata, without any budding. TGBp2 and TGBp3 are necessary for intracellular delivery of TGBp1-containing vRNPs to plasmodesmata. Can gate plasmodesmata and increase their size exclusion limit. To a lesser extent than TGB3, induces host actin cytoskeleton network thickening, which probably plays a major role in virus cell-to-cell movement. This chain is Movement protein TGB2, found in Barley stripe mosaic virus (BSMV).